Consider the following 200-residue polypeptide: Orotate phosphoribosyltransferase (200 aa).

Residues R95, K99, H101, and 121–129 (DDVATTGGS) each bind 5-phospho-alpha-D-ribose 1-diphosphate. Orotate contacts are provided by T125 and R153.

This sequence belongs to the purine/pyrimidine phosphoribosyltransferase family. PyrE subfamily. As to quaternary structure, homodimer. Mg(2+) serves as cofactor.

It catalyses the reaction orotidine 5'-phosphate + diphosphate = orotate + 5-phospho-alpha-D-ribose 1-diphosphate. Its pathway is pyrimidine metabolism; UMP biosynthesis via de novo pathway; UMP from orotate: step 1/2. In terms of biological role, catalyzes the transfer of a ribosyl phosphate group from 5-phosphoribose 1-diphosphate to orotate, leading to the formation of orotidine monophosphate (OMP). The sequence is that of Orotate phosphoribosyltransferase from Cenarchaeum symbiosum (strain A).